Here is a 325-residue protein sequence, read N- to C-terminus: tRNA U34 carboxymethyltransferase (325 aa).

Residues K91, W105, K110, G130, 152–154, 181–182, M197, Y201, and R316 contribute to the carboxy-S-adenosyl-L-methionine site; these read DPS and ME.

The protein belongs to the class I-like SAM-binding methyltransferase superfamily. CmoB family. Homotetramer.

It carries out the reaction carboxy-S-adenosyl-L-methionine + 5-hydroxyuridine(34) in tRNA = 5-carboxymethoxyuridine(34) in tRNA + S-adenosyl-L-homocysteine + H(+). Functionally, catalyzes carboxymethyl transfer from carboxy-S-adenosyl-L-methionine (Cx-SAM) to 5-hydroxyuridine (ho5U) to form 5-carboxymethoxyuridine (cmo5U) at position 34 in tRNAs. In Saccharophagus degradans (strain 2-40 / ATCC 43961 / DSM 17024), this protein is tRNA U34 carboxymethyltransferase.